The primary structure comprises 1463 residues: Chitin binding domain (ChtBD2) containing chtb-1 (1463 aa).

The signal sequence occupies residues 1–17 (MLRNLILITLLVASGHG). Residues 70 to 99 (SSVPSVPAENTQPQQHPKARKPASPNICEQ) form a disordered region. One can recognise a Chitin-binding type-2 domain in the interval 94 to 164 (PNICEQDNGA…IVPKRMSSLS (71 aa)). C141 and C154 form a disulfide bridge. Disordered regions lie at residues 720-773 (IDSD…DFPI) and 841-869 (KNPKKRKTKRRKQKQDENEMEASANFPDS). Over residues 722–734 (SDTNSTTNPSQPE) the composition is skewed to polar residues. 2 stretches are compositionally biased toward basic residues: residues 740–756 (NNTKKSNSSKKHRKPKK) and 843–853 (PKKRKTKRRKQ).

In Caenorhabditis elegans, this protein is Chitin binding domain (ChtBD2) containing chtb-1.